A 335-amino-acid polypeptide reads, in one-letter code: MQVTILGAGAFGTALSIALCNTGKKVRIWSRNGQVVESLRTHGENSVYLPGFKVPREVLVHSDMGLATDGPAAILMCVPAQELRSLCNTITAASALEAGVPLLVCSKGIENSSLKFPSEVVAEMFPQNPVFVLSGPALARELASGLPCAMVLAGDEITTAETLASQLSGPALAIVHSGDLMGVQVGAVMKNIIAIASGIIAGMGLGHNASAIVMVQGMSEIKAVCEAKVGVAATETLIGLSCLGDLVLTCTAPGSRNMSFGSSVGKAGRAGASGQQKPMLVEGVESVTAMVNMGKALNLELPICSAIARMLHGQLGVRQAAAEILSAPVKSRLNV.

3 residues coordinate NADPH: F11, R31, and K107. 2 residues coordinate sn-glycerol 3-phosphate: K107 and G135. A139 is an NADPH binding site. The sn-glycerol 3-phosphate site is built by K190, D245, S255, R256, and N257. K190 acts as the Proton acceptor in catalysis. R256 is an NADPH binding site. Residues L280 and E282 each contribute to the NADPH site.

The protein belongs to the NAD-dependent glycerol-3-phosphate dehydrogenase family.

It localises to the cytoplasm. The catalysed reaction is sn-glycerol 3-phosphate + NAD(+) = dihydroxyacetone phosphate + NADH + H(+). It carries out the reaction sn-glycerol 3-phosphate + NADP(+) = dihydroxyacetone phosphate + NADPH + H(+). It functions in the pathway membrane lipid metabolism; glycerophospholipid metabolism. In terms of biological role, catalyzes the reduction of the glycolytic intermediate dihydroxyacetone phosphate (DHAP) to sn-glycerol 3-phosphate (G3P), the key precursor for phospholipid synthesis. The chain is Glycerol-3-phosphate dehydrogenase [NAD(P)+] from Anaplasma marginale (strain St. Maries).